A 188-amino-acid polypeptide reads, in one-letter code: Elongation factor P (188 aa).

This sequence belongs to the elongation factor P family.

The protein localises to the cytoplasm. It participates in protein biosynthesis; polypeptide chain elongation. Its function is as follows. Involved in peptide bond synthesis. Stimulates efficient translation and peptide-bond synthesis on native or reconstituted 70S ribosomes in vitro. Probably functions indirectly by altering the affinity of the ribosome for aminoacyl-tRNA, thus increasing their reactivity as acceptors for peptidyl transferase. This is Elongation factor P from Bacteroides fragilis (strain ATCC 25285 / DSM 2151 / CCUG 4856 / JCM 11019 / LMG 10263 / NCTC 9343 / Onslow / VPI 2553 / EN-2).